The following is a 1289-amino-acid chain: uncharacterized protein (1289 aa).

The N-terminal stretch at 1–23 (MRKYTVIASILLSFLSVLSGGHH) is a signal peptide. In terms of domain architecture, LTD spans 141–277 (EGYQADLAHI…VVISTNTGKD (137 aa)).

This is an uncharacterized protein from Bacillus subtilis (strain 168).